The sequence spans 354 residues: S-adenosylmethionine:tRNA ribosyltransferase-isomerase (354 aa).

This sequence belongs to the QueA family. Monomer.

It localises to the cytoplasm. The catalysed reaction is 7-aminomethyl-7-carbaguanosine(34) in tRNA + S-adenosyl-L-methionine = epoxyqueuosine(34) in tRNA + adenine + L-methionine + 2 H(+). It participates in tRNA modification; tRNA-queuosine biosynthesis. In terms of biological role, transfers and isomerizes the ribose moiety from AdoMet to the 7-aminomethyl group of 7-deazaguanine (preQ1-tRNA) to give epoxyqueuosine (oQ-tRNA). The protein is S-adenosylmethionine:tRNA ribosyltransferase-isomerase of Pseudomonas savastanoi pv. phaseolicola (strain 1448A / Race 6) (Pseudomonas syringae pv. phaseolicola (strain 1448A / Race 6)).